A 425-amino-acid chain; its full sequence is Tol-Pal system protein TolB (425 aa).

An N-terminal signal peptide occupies residues 1–23 (MQMMKKRILLCLLVGMTCLPVLA).

This sequence belongs to the TolB family. In terms of assembly, the Tol-Pal system is composed of five core proteins: the inner membrane proteins TolA, TolQ and TolR, the periplasmic protein TolB and the outer membrane protein Pal. They form a network linking the inner and outer membranes and the peptidoglycan layer.

Its subcellular location is the periplasm. Part of the Tol-Pal system, which plays a role in outer membrane invagination during cell division and is important for maintaining outer membrane integrity. The chain is Tol-Pal system protein TolB from Albidiferax ferrireducens (strain ATCC BAA-621 / DSM 15236 / T118) (Rhodoferax ferrireducens).